Consider the following 292-residue polypeptide: 33 kDa chaperonin (292 aa).

2 disulfides stabilise this stretch: Cys-230/Cys-232 and Cys-263/Cys-266.

This sequence belongs to the HSP33 family. Under oxidizing conditions two disulfide bonds are formed involving the reactive cysteines. Under reducing conditions zinc is bound to the reactive cysteines and the protein is inactive.

The protein resides in the cytoplasm. Functionally, redox regulated molecular chaperone. Protects both thermally unfolding and oxidatively damaged proteins from irreversible aggregation. Plays an important role in the bacterial defense system toward oxidative stress. This is 33 kDa chaperonin from Salmonella typhimurium (strain LT2 / SGSC1412 / ATCC 700720).